We begin with the raw amino-acid sequence, 1798 residues long: Non-reducing polyketide synthase nscA (1798 aa).

The tract at residues 25–256 (RRLDQHSKDR…PLPVYDGLCH (232 aa)) is N-terminal acylcarrier protein transacylase domain (SAT). The 434-residue stretch at 392 to 825 (SSKLAIVGMA…GGNTTLLLED (434 aa)) folds into the Ketosynthase family 3 (KS3) domain. Active-site for beta-ketoacyl synthase activity residues include Cys565, His700, and His743. Residues 931–1224 (FTGQGAYYHG…LVRSMIPSAP (294 aa)) form a malonyl-CoA:ACP transacylase (MAT) domain region. An N-terminal hotdog fold region spans residues 1322–1458 (HQITAETVRT…ATILFEDPGA (137 aa)). A PKS/mFAS DH domain is found at 1322-1632 (HQITAETVRT…FRRVPRLLMD (311 aa)). His1354 acts as the Proton acceptor; for dehydratase activity in catalysis. The product template (PT) domain stretch occupies residues 1390–1628 (HMNLTDVEVL…GMIRFRRVPR (239 aa)). Residues 1486-1632 (ASRLSKPLAY…FRRVPRLLMD (147 aa)) are C-terminal hotdog fold. Residue Asp1543 is the Proton donor; for dehydratase activity of the active site. The disordered stretch occupies residues 1695–1721 (LLATSSGDSTPKEPPIVTPAESERAGP). In terms of domain architecture, Carrier spans 1721-1798 (PVDNNMISQC…EMTAWIEEYC (78 aa)). Ser1758 carries the post-translational modification O-(pantetheine 4'-phosphoryl)serine.

Pantetheine 4'-phosphate serves as cofactor.

It functions in the pathway secondary metabolite biosynthesis. Its function is as follows. Non-reducing polyketide synthase; part of the gene cluster that mediates the biosynthesis of neosartoricin B, a prenylated anthracenone that probably exhibits T-cell antiproliferative activity, suggestive of a physiological role as an immunosuppressive agent. The non-reducing polyketide synthase nscA probably synthesizes and cyclizes the decaketide backbone. The hydrolase nscB then mediates the product release through hydrolysis followed by spontaneous decarboxylation. The prenyltransferase nscD catalyzes the addition of the dimethylallyl group to the aromatic C5. The FAD-dependent monooxygenase nscC is then responsible for the stereospecific hydroxylation at C2. Neosartoricin B can be converted into two additional compounds neosartoricins C and D. Neosartoricin C is a spirocyclic compound that is cyclized through the attack of C3 hydroxyl on C14, followed by dehydration. On the other hand, neosartoricin D is a further cyclized compound in which attack of C2 on C14 in neosartoricin C results in the formation of the acetal-containing dioxabicyclo-octanone ring. Both of these compounds are novel and possibly represent related metabolites of the gene cluster. This is Non-reducing polyketide synthase nscA from Trichophyton rubrum (strain ATCC MYA-4607 / CBS 118892) (Athlete's foot fungus).